We begin with the raw amino-acid sequence, 314 residues long: Probable cell division protein WhiA (314 aa).

Positions 274-308 form a DNA-binding region, H-T-H motif; sequence SLKELGEMVSTGPISKSGMNHRLRKLNELADKIRN.

Belongs to the WhiA family.

Its function is as follows. Involved in cell division and chromosome segregation. The protein is Probable cell division protein WhiA of Staphylococcus epidermidis (strain ATCC 35984 / DSM 28319 / BCRC 17069 / CCUG 31568 / BM 3577 / RP62A).